The primary structure comprises 433 residues: Pyrimidine-nucleoside phosphorylase (433 aa).

Residue 81–83 participates in phosphate binding; sequence KHS. K(+)-binding residues include Gly-88 and Thr-90. Phosphate is bound by residues Thr-92, 108-110, and Thr-120; that span reads KMS. Residues Arg-168 and Lys-187 each contribute to the substrate site. K(+) contacts are provided by Leu-243, Ala-246, and Glu-255.

It belongs to the thymidine/pyrimidine-nucleoside phosphorylase family. As to quaternary structure, homodimer. K(+) serves as cofactor.

The catalysed reaction is uridine + phosphate = alpha-D-ribose 1-phosphate + uracil. The enzyme catalyses thymidine + phosphate = 2-deoxy-alpha-D-ribose 1-phosphate + thymine. It carries out the reaction 2'-deoxyuridine + phosphate = 2-deoxy-alpha-D-ribose 1-phosphate + uracil. Its function is as follows. Catalyzes phosphorolysis of the pyrimidine nucleosides uridine, thymidine and 2'-deoxyuridine with the formation of the corresponding pyrimidine base and ribose-1-phosphate. The chain is Pyrimidine-nucleoside phosphorylase (pdp) from Staphylococcus aureus (strain MSSA476).